A 323-amino-acid chain; its full sequence is Sphingolipid delta(4)-desaturase DES1 (323 aa).

2 helical membrane-spanning segments follow: residues 41–61 (HNLIWIVSLMVLTQLVAFYLV) and 68–88 (WLLFWTYVVGSCISHSMTLAI). The Histidine box-1 signature appears at 89 to 93 (HEISH). Residues 104-124 (WNRCFGMFANLPLGLPYSVSF) traverse the membrane as a helical segment. The Histidine box-2 motif lies at 128–132 (HMDHH). A run of 3 helical transmembrane segments spans residues 152 to 172 (FFCTPLRKLVWIILQPLFYTI), 185 to 205 (LEIINLVVQFSFDALIYYTLG), and 210 to 230 (FYMLVGSILGLGLHPISGHFI). Residues 259–263 (HNEHH) carry the Histidine box-3 motif.

This sequence belongs to the fatty acid desaturase type 1 family. DEGS subfamily. As to quaternary structure, interacts with RLBP1; the interaction increases synthesis of chromophore-precursors by DEGS1.

The protein resides in the endoplasmic reticulum membrane. It catalyses the reaction an N-acylsphinganine + 2 Fe(II)-[cytochrome b5] + O2 + 2 H(+) = an N-acylsphing-4-enine + 2 Fe(III)-[cytochrome b5] + 2 H2O. It carries out the reaction all-trans-retinol = 11-cis-retinol. The enzyme catalyses all-trans-retinol = 9-cis-retinol. The catalysed reaction is all-trans-retinol = 13-cis-retinol. It catalyses the reaction 11-cis-retinol = 13-cis-retinol. It carries out the reaction 11-cis-retinol = 9-cis-retinol. Functionally, has sphingolipid-delta-4-desaturase activity. Converts D-erythro-sphinganine to D-erythro-sphingosine (E-sphing-4-enine). Catalyzes the equilibrium isomerization of retinols. In Xenopus tropicalis (Western clawed frog), this protein is Sphingolipid delta(4)-desaturase DES1 (degs1).